Consider the following 491-residue polypeptide: 2,3-bisphosphoglycerate-independent phosphoglycerate mutase (491 aa).

Mn(2+)-binding residues include D11 and S61. The active-site Phosphoserine intermediate is the S61. Substrate contacts are provided by residues H118, R147–D148, R177, R183, R248–R251, and K320. D386, H390, D427, H428, and H445 together coordinate Mn(2+).

This sequence belongs to the BPG-independent phosphoglycerate mutase family. Monomer. Mn(2+) serves as cofactor.

It carries out the reaction (2R)-2-phosphoglycerate = (2R)-3-phosphoglycerate. The protein operates within carbohydrate degradation; glycolysis; pyruvate from D-glyceraldehyde 3-phosphate: step 3/5. Catalyzes the interconversion of 2-phosphoglycerate and 3-phosphoglycerate. This Sulfurimonas denitrificans (strain ATCC 33889 / DSM 1251) (Thiomicrospira denitrificans (strain ATCC 33889 / DSM 1251)) protein is 2,3-bisphosphoglycerate-independent phosphoglycerate mutase.